The sequence spans 226 residues: Pathogenesis-related protein R major form (226 aa).

An N-terminal signal peptide occupies residues 1–25; that stretch reads MNFLKSFPFFAFLYFGQYFVAVTHA. 8 cysteine pairs are disulfide-bonded: Cys34/Cys225, Cys75/Cys85, Cys90/Cys96, Cys140/Cys214, Cys145/Cys197, Cys153/Cys163, Cys167/Cys176, and Cys177/Cys184.

Belongs to the thaumatin family.

Its subcellular location is the vacuole. This is Pathogenesis-related protein R major form from Nicotiana tabacum (Common tobacco).